The chain runs to 476 residues: Ribulose bisphosphate carboxylase/oxygenase activase 1, chloroplastic (476 aa).

The transit peptide at 1–56 directs the protein to the chloroplast; sequence MAAAYSTVGAVNRAPLSLNGSGARASLVPSTAFFGSSLKKSAAKFPKASSGNFKIV. 165–172 is an ATP binding site; the sequence is GGKGQGKS.

This sequence belongs to the RuBisCO activase family.

The protein localises to the plastid. The protein resides in the chloroplast stroma. Its function is as follows. Activation of RuBisCO (ribulose-1,5-bisphosphate carboxylase/oxygenase; EC 4.1.1.39) involves the ATP-dependent carboxylation of the epsilon-amino group of lysine leading to a carbamate structure. The chain is Ribulose bisphosphate carboxylase/oxygenase activase 1, chloroplastic (RCA1) from Larrea tridentata (Creosote bush).